The following is a 129-amino-acid chain: Cytochrome c oxidase subunit 5B, mitochondrial (129 aa).

A mitochondrion-targeting transit peptide spans 1-31; the sequence is MASRLLRGAGALAAQALRARGPSGAAAVRSM. Lys-68 and Lys-86 each carry N6-acetyllysine. Positions 91, 93, 113, and 116 each coordinate Zn(2+). Lys-121 carries the N6-acetyllysine modification.

It belongs to the cytochrome c oxidase subunit 5B family. In terms of assembly, component of the cytochrome c oxidase (complex IV, CIV), a multisubunit enzyme composed of 14 subunits. The complex is composed of a catalytic core of 3 subunits MT-CO1, MT-CO2 and MT-CO3, encoded in the mitochondrial DNA, and 11 supernumerary subunits COX4I, COX5A, COX5B, COX6A, COX6B, COX6C, COX7A, COX7B, COX7C, COX8 and NDUFA4, which are encoded in the nuclear genome. The complex exists as a monomer or a dimer and forms supercomplexes (SCs) in the inner mitochondrial membrane with NADH-ubiquinone oxidoreductase (complex I, CI) and ubiquinol-cytochrome c oxidoreductase (cytochrome b-c1 complex, complex III, CIII), resulting in different assemblies (supercomplex SCI(1)III(2)IV(1) and megacomplex MCI(2)III(2)IV(2)).

It localises to the mitochondrion inner membrane. It participates in energy metabolism; oxidative phosphorylation. Functionally, component of the cytochrome c oxidase, the last enzyme in the mitochondrial electron transport chain which drives oxidative phosphorylation. The respiratory chain contains 3 multisubunit complexes succinate dehydrogenase (complex II, CII), ubiquinol-cytochrome c oxidoreductase (cytochrome b-c1 complex, complex III, CIII) and cytochrome c oxidase (complex IV, CIV), that cooperate to transfer electrons derived from NADH and succinate to molecular oxygen, creating an electrochemical gradient over the inner membrane that drives transmembrane transport and the ATP synthase. Cytochrome c oxidase is the component of the respiratory chain that catalyzes the reduction of oxygen to water. Electrons originating from reduced cytochrome c in the intermembrane space (IMS) are transferred via the dinuclear copper A center (CU(A)) of subunit 2 and heme A of subunit 1 to the active site in subunit 1, a binuclear center (BNC) formed by heme A3 and copper B (CU(B)). The BNC reduces molecular oxygen to 2 water molecules using 4 electrons from cytochrome c in the IMS and 4 protons from the mitochondrial matrix. In Pongo abelii (Sumatran orangutan), this protein is Cytochrome c oxidase subunit 5B, mitochondrial (COX5B).